The following is a 346-amino-acid chain: NADH-quinone oxidoreductase subunit H (346 aa).

A run of 8 helical transmembrane segments spans residues 6-26, 76-96, 128-148, 166-186, 198-218, 260-280, 289-309, and 324-344; these read ILFW…ACAY, IMYL…WSVV, ILFL…AGWA, ISYE…TGSL, LWNI…VAMF, ITMS…PFGI, LFGL…FVWV, and LGWK…SLYI.

The protein belongs to the complex I subunit 1 family. As to quaternary structure, NDH-1 is composed of 14 different subunits. Subunits NuoA, H, J, K, L, M, N constitute the membrane sector of the complex.

It is found in the cell inner membrane. It catalyses the reaction a quinone + NADH + 5 H(+)(in) = a quinol + NAD(+) + 4 H(+)(out). NDH-1 shuttles electrons from NADH, via FMN and iron-sulfur (Fe-S) centers, to quinones in the respiratory chain. The immediate electron acceptor for the enzyme in this species is believed to be ubiquinone. Couples the redox reaction to proton translocation (for every two electrons transferred, four hydrogen ions are translocated across the cytoplasmic membrane), and thus conserves the redox energy in a proton gradient. This subunit may bind ubiquinone. The chain is NADH-quinone oxidoreductase subunit H from Leptospira borgpetersenii serovar Hardjo-bovis (strain JB197).